We begin with the raw amino-acid sequence, 247 residues long: Protein GrpE (247 aa).

Disordered stretches follow at residues 1–68 (MKKN…KNDD) and 226–247 (PAEKQDEKKAEESEAADKKNEN). Basic and acidic residues-rich tracts occupy residues 7–35 (KHADKKEAAKEELEKDLQPKDESAVKDEQ), 43–54 (TSKENPQEDKAE), and 228–247 (EKQDEKKAEESEAADKKNEN).

This sequence belongs to the GrpE family. In terms of assembly, homodimer.

It localises to the cytoplasm. Participates actively in the response to hyperosmotic and heat shock by preventing the aggregation of stress-denatured proteins, in association with DnaK and GrpE. It is the nucleotide exchange factor for DnaK and may function as a thermosensor. Unfolded proteins bind initially to DnaJ; upon interaction with the DnaJ-bound protein, DnaK hydrolyzes its bound ATP, resulting in the formation of a stable complex. GrpE releases ADP from DnaK; ATP binding to DnaK triggers the release of the substrate protein, thus completing the reaction cycle. Several rounds of ATP-dependent interactions between DnaJ, DnaK and GrpE are required for fully efficient folding. The polypeptide is Protein GrpE (Treponema denticola (strain ATCC 35405 / DSM 14222 / CIP 103919 / JCM 8153 / KCTC 15104)).